Reading from the N-terminus, the 108-residue chain is Thioredoxin (108 aa).

Residues 2–108 (GKYFEATDKN…IAKKIDEHIG (107 aa)) form the Thioredoxin domain. Residues cysteine 32 and cysteine 35 are joined by a disulfide bond.

This sequence belongs to the thioredoxin family.

Functionally, participates in various redox reactions through the reversible oxidation of its active center dithiol to a disulfide and catalyzes dithiol-disulfide exchange reactions. This chain is Thioredoxin (trxA), found in Chlorobaculum thiosulfatiphilum (Chlorobium limicola f.sp. thiosulfatophilum).